Reading from the N-terminus, the 629-residue chain is Dehydrogenase pyvF (629 aa).

The signal sequence occupies residues 1 to 22; it reads MAGSPFTTALLSAWTLSTVAVG. Residues 61 to 62 and 82 to 83 each bind FAD; these read AS and EA. Asparagine 92 carries N-linked (GlcNAc...) asparagine glycosylation. 144–147 is an FAD binding site; that stretch reads NLMA. Residues asparagine 172, asparagine 182, asparagine 256, asparagine 284, asparagine 312, and asparagine 421 are each glycosylated (N-linked (GlcNAc...) asparagine). The active-site Proton acceptor is histidine 552. FAD-binding positions include alanine 586 and 597–598; that span reads PL.

The protein belongs to the GMC oxidoreductase family. In terms of assembly, homodimer. The cofactor is FAD.

It participates in secondary metabolite biosynthesis. Its function is as follows. Dehydrogenase; part of the gene cluster that mediates the biosynthesis of pyranoviolin A, a pyranonigrin analog with a C-3 methoxy group. Initially, the PKS portion of pyvA synthesizes C-10 carbon chain from 5 molecules of malonyl-CoA, which is then condensed with the thiolation (T) domain-bound glycine activated by the adenylation (A) domain. The subsequent chain release by Dieckmann condensation (DKC) could be catalyzed by the TE domain present at the C-terminus of pyvA and/or the alpha/beta hydrolase pyvD, installing the tetramic acid moiety. The FAD-dependent monooxygenase pyvC next epoxidizes one of the olefins of the polyketide part, and the epoxide ring-opening induces the dihydro-gamma-pyrone ring formation. The cytochrome P450 monooxygeanse pyvB would be responsible for the 2 consecutive reactions, in which the dihydro-gamma-pyrone is oxidized to gamma-pyrone and C-7 is hydroxylated to yield pyranonigrin F. Finally, the O-methyltransferase pyvH methylates the C-3 hydroxy group to complete the biosynthesis. This Aspergillus violaceofuscus (strain CBS 115571) protein is Dehydrogenase pyvF.